A 609-amino-acid polypeptide reads, in one-letter code: Tyrosyl-DNA phosphodiesterase 1 (609 aa).

The span at 1-12 (MSQESSYGKWTI) shows a compositional bias: polar residues. A disordered region spans residues 1 to 155 (MSQESSYGKW…YETSGEGQDI (155 aa)). Residue S61 is modified to Phosphoserine. The segment covering 105-118 (QPKRVLPQEKKHVS) has biased composition (basic and acidic residues). Phosphoserine is present on residues S119 and S132. T148 is subject to Phosphothreonine. The residue at position 149 (S149) is a Phosphoserine. H264 functions as the Nucleophile in the catalytic mechanism. K266 is a binding site for substrate. An interaction with DNA region spans residues 401 to 404 (SIGS). H494 acts as the Proton donor/acceptor in catalysis. K496 lines the substrate pocket.

This sequence belongs to the tyrosyl-DNA phosphodiesterase family. As to quaternary structure, monomer. Ubiquitous.

It is found in the nucleus. Its subcellular location is the cytoplasm. Functionally, DNA repair enzyme that can remove a variety of covalent adducts from DNA through hydrolysis of a 3'-phosphodiester bond, giving rise to DNA with a free 3' phosphate. Catalyzes the hydrolysis of dead-end complexes between DNA and the topoisomerase I active site tyrosine residue. Hydrolyzes 3'-phosphoglycolates on protruding 3' ends on DNA double-strand breaks due to DNA damage by radiation and free radicals. Acts on blunt-ended double-strand DNA breaks and on single-stranded DNA. Has low 3'exonuclease activity and can remove a single nucleoside from the 3'end of DNA and RNA molecules with 3'hydroxyl groups. Has no exonuclease activity towards DNA or RNA with a 3'phosphate. The polypeptide is Tyrosyl-DNA phosphodiesterase 1 (Tdp1) (Mus musculus (Mouse)).